Consider the following 145-residue polypeptide: Large ribosomal subunit protein uL24 (145 aa).

Disordered stretches follow at residues 1–21 (MKFN…HFNA) and 122–145 (KAKS…KMQE). A Glycyl lysine isopeptide (Lys-Gly) (interchain with G-Cter in SUMO2) cross-link involves residue K136. The residue at position 139 (T139) is a Phosphothreonine.

It belongs to the universal ribosomal protein uL24 family. In terms of assembly, component of the large ribosomal subunit. Interacts with DHX33. Post-translationally, ufmylated by UFL1 in response to endoplasmic reticulum stress, promoting reticulophagy of endoplasmic reticulum sheets.

It localises to the cytoplasm. Functionally, component of the large ribosomal subunit. The ribosome is a large ribonucleoprotein complex responsible for the synthesis of proteins in the cell. This is Large ribosomal subunit protein uL24 (Rpl26) from Rattus norvegicus (Rat).